Consider the following 121-residue polypeptide: NADPH-dependent 7-cyano-7-deazaguanine reductase (121 aa).

Residue Cys-36 is the Thioimide intermediate of the active site. Asp-43 (proton donor) is an active-site residue. Residues 58–60 (VEL) and 77–78 (YE) each bind substrate.

Belongs to the GTP cyclohydrolase I family. QueF type 1 subfamily.

It localises to the cytoplasm. It carries out the reaction 7-aminomethyl-7-carbaguanine + 2 NADP(+) = 7-cyano-7-deazaguanine + 2 NADPH + 3 H(+). Its pathway is tRNA modification; tRNA-queuosine biosynthesis. In terms of biological role, catalyzes the NADPH-dependent reduction of 7-cyano-7-deazaguanine (preQ0) to 7-aminomethyl-7-deazaguanine (preQ1). The sequence is that of NADPH-dependent 7-cyano-7-deazaguanine reductase from Rhodopirellula baltica (strain DSM 10527 / NCIMB 13988 / SH1).